The following is a 570-amino-acid chain: Peptidyl-prolyl cis-trans isomerase FKBP9 (570 aa).

The N-terminal stretch at Met-1 to Ala-24 is a signal peptide. PPIase FKBP-type domains are found at residues Gly-54 to Trp-142, Ser-166 to His-254, Gly-278 to His-365, and Gly-389 to Val-477. Asn-174, Asn-286, Asn-302, and Asn-397 each carry an N-linked (GlcNAc...) asparagine glycan. 2 EF-hand domains span residues Trp-488–Ser-523 and Asn-533–Asp-568. Residues Asp-501, Asp-503, Asn-505, Glu-507, Glu-512, Asp-546, Asn-548, Asp-550, Lys-552, and Glu-557 each contribute to the Ca(2+) site. A Prevents secretion from ER motif is present at residues His-567–Leu-570.

Phosphorylated.

It localises to the endoplasmic reticulum lumen. The catalysed reaction is [protein]-peptidylproline (omega=180) = [protein]-peptidylproline (omega=0). With respect to regulation, inhibited by FK506. PPIases accelerate the folding of proteins during protein synthesis. This chain is Peptidyl-prolyl cis-trans isomerase FKBP9 (Fkbp9), found in Rattus norvegicus (Rat).